The primary structure comprises 373 residues: Flagellar P-ring protein (373 aa).

An N-terminal signal peptide occupies residues Met-1 to Ala-26.

This sequence belongs to the FlgI family. As to quaternary structure, the basal body constitutes a major portion of the flagellar organelle and consists of four rings (L,P,S, and M) mounted on a central rod.

It is found in the periplasm. Its subcellular location is the bacterial flagellum basal body. Assembles around the rod to form the L-ring and probably protects the motor/basal body from shearing forces during rotation. This is Flagellar P-ring protein from Rhizobium johnstonii (strain DSM 114642 / LMG 32736 / 3841) (Rhizobium leguminosarum bv. viciae).